Consider the following 648-residue polypeptide: tRNA 5-methylaminomethyl-2-thiouridine biosynthesis bifunctional protein MnmC (648 aa).

The tRNA (mnm(5)s(2)U34)-methyltransferase stretch occupies residues 1 to 228; that stretch reads MTDRLVPASL…VDDLLVGEYA (228 aa). The tract at residues 252–648 is FAD-dependent cmnm(5)s(2)U34 oxidoreductase; sequence IGAGLAGCAV…LRARRVGRAG (397 aa).

This sequence in the N-terminal section; belongs to the methyltransferase superfamily. tRNA (mnm(5)s(2)U34)-methyltransferase family. The protein in the C-terminal section; belongs to the DAO family. The cofactor is FAD.

It is found in the cytoplasm. The enzyme catalyses 5-aminomethyl-2-thiouridine(34) in tRNA + S-adenosyl-L-methionine = 5-methylaminomethyl-2-thiouridine(34) in tRNA + S-adenosyl-L-homocysteine + H(+). Functionally, catalyzes the last two steps in the biosynthesis of 5-methylaminomethyl-2-thiouridine (mnm(5)s(2)U) at the wobble position (U34) in tRNA. Catalyzes the FAD-dependent demodification of cmnm(5)s(2)U34 to nm(5)s(2)U34, followed by the transfer of a methyl group from S-adenosyl-L-methionine to nm(5)s(2)U34, to form mnm(5)s(2)U34. The polypeptide is tRNA 5-methylaminomethyl-2-thiouridine biosynthesis bifunctional protein MnmC (Burkholderia lata (strain ATCC 17760 / DSM 23089 / LMG 22485 / NCIMB 9086 / R18194 / 383)).